A 111-amino-acid chain; its full sequence is Large ribosomal subunit protein eL34B (111 aa).

At Tyr76 the chain carries Phosphotyrosine.

It belongs to the eukaryotic ribosomal protein eL34 family. As to quaternary structure, component of the large ribosomal subunit (LSU). Mature yeast ribosomes consist of a small (40S) and a large (60S) subunit. The 40S small subunit contains 1 molecule of ribosomal RNA (18S rRNA) and at least 33 different proteins. The large 60S subunit contains 3 rRNA molecules (25S, 5.8S and 5S rRNA) and at least 46 different proteins.

It is found in the cytoplasm. It localises to the nucleus. The protein resides in the nucleolus. In terms of biological role, component of the ribosome, a large ribonucleoprotein complex responsible for the synthesis of proteins in the cell. The small ribosomal subunit (SSU) binds messenger RNAs (mRNAs) and translates the encoded message by selecting cognate aminoacyl-transfer RNA (tRNA) molecules. The large subunit (LSU) contains the ribosomal catalytic site termed the peptidyl transferase center (PTC), which catalyzes the formation of peptide bonds, thereby polymerizing the amino acids delivered by tRNAs into a polypeptide chain. The nascent polypeptides leave the ribosome through a tunnel in the LSU and interact with protein factors that function in enzymatic processing, targeting, and the membrane insertion of nascent chains at the exit of the ribosomal tunnel. In Schizosaccharomyces pombe (strain 972 / ATCC 24843) (Fission yeast), this protein is Large ribosomal subunit protein eL34B (rpl3402).